A 53-amino-acid chain; its full sequence is uncharacterized protein (53 aa).

This is an uncharacterized protein from Bacillus subtilis (strain 168).